The chain runs to 110 residues: Large ribosomal subunit protein uL22 (110 aa).

The protein belongs to the universal ribosomal protein uL22 family. As to quaternary structure, part of the 50S ribosomal subunit.

Its function is as follows. This protein binds specifically to 23S rRNA; its binding is stimulated by other ribosomal proteins, e.g. L4, L17, and L20. It is important during the early stages of 50S assembly. It makes multiple contacts with different domains of the 23S rRNA in the assembled 50S subunit and ribosome. The globular domain of the protein is located near the polypeptide exit tunnel on the outside of the subunit, while an extended beta-hairpin is found that lines the wall of the exit tunnel in the center of the 70S ribosome. This is Large ribosomal subunit protein uL22 from Mycoplasmopsis pulmonis (strain UAB CTIP) (Mycoplasma pulmonis).